The following is a 103-amino-acid chain: Phorbol-12-myristate-13-acetate-induced protein 1 (103 aa).

Short sequence motifs (BH3) lie at residues 27–35 (LRKIGDKVY) and 78–86 (LRRIGDKVN). The interval 90–99 (KLLNLISKLF) is required for mitochondrial location.

This sequence belongs to the PMAIP1 family. As to quaternary structure, interacts with MCL1. Interacts with BCL2A1. Interacts with BAX. Interacts with BCL2L10. In terms of tissue distribution, detected in thymocytes after irradiation with X-rays. Not detectable in untreated thymocytes (at protein level). Detected in embryonic neural precursor cells of the telencephalon Constitutively expressed at low levels in adult brain, testis, thymus, spleen, lung and kidney.

It is found in the mitochondrion. Its function is as follows. Promotes activation of caspases and apoptosis. Promotes mitochondrial membrane changes and efflux of apoptogenic proteins from the mitochondria. Contributes to p53/TP53-dependent apoptosis after radiation exposure. Promotes proteasomal degradation of MCL1. Competes with BIM/BCL2L11 for binding to MCL1 and can displace BIM/BCL2L11 from its binding site on MCL1. Competes with BAK1 for binding to MCL1 and can displace BAK1 from its binding site on MCL1. This chain is Phorbol-12-myristate-13-acetate-induced protein 1 (Pmaip1), found in Mus musculus (Mouse).